The primary structure comprises 433 residues: G-protein coupled receptor 22 (433 aa).

Over 1–45 (MCFSPILEINMQSESNITVRDDIDDINTNMYQPLSYPLSFQVSLT) the chain is Extracellular. Asn16 is a glycosylation site (N-linked (GlcNAc...) asparagine). A helical transmembrane segment spans residues 46–66 (GFLMLEIVLGLGSNLTVLVLY). The Cytoplasmic portion of the chain corresponds to 67–85 (CMKSNLINSVSNIITMNLH). Residues 86–106 (VLDVIICVGCIPLTIVILLLS) form a helical membrane-spanning segment. The Extracellular segment spans residues 107 to 115 (LESNTALIC). A helical membrane pass occupies residues 116 to 136 (CFHEACVSFASVSTAINVFAI). Topologically, residues 137–156 (TLDRYDISVKPANRILTMGR) are cytoplasmic. A helical transmembrane segment spans residues 157–177 (AVMLMISIWIFSFFSFLIPFI). The Extracellular segment spans residues 178-208 (EVNFFSLQSGNTWENKTLLCVSTNEYYTELG). An N-linked (GlcNAc...) asparagine glycan is attached at Asn192. The chain crosses the membrane as a helical span at residues 209–229 (MYYHLLVQIPIFFFTVVVMLI). Topologically, residues 230–315 (TYTKILQALN…ERQKRVFRMS (86 aa)) are cytoplasmic. A helical membrane pass occupies residues 316–336 (LLIISTFLLCWTPISVLNTTI). Residues 337–349 (LCLGPSDLLVKLR) are Extracellular-facing. A helical transmembrane segment spans residues 350 to 370 (LCFLVMAYGTTIFHPLLYAFT). At 371–433 (RQKFQKVLKS…KCLVPQVVTD (63 aa)) the chain is on the cytoplasmic side.

It belongs to the G-protein coupled receptor 1 family. As to expression, high expression in adult and fetal heart tissue. Expressed in the brain, with enrichment in the accumbens, amygdala, cerebellum, cortex, and hippocampus regions.

It localises to the cell membrane. Its function is as follows. Orphan G-protein coupled receptor. Seems to act through a G(i)/G(o) mediated pathway. May be involved in ciliogenesis. In Homo sapiens (Human), this protein is G-protein coupled receptor 22.